The sequence spans 273 residues: MSDMHSLLIAAILGVVEGLTEFLPVSSTGHMIIVGHLLGFEGDTAKTFEVVIQLGSILAVVVMFWRRLFGLIGIHFGRPLQHEGENKGRLTLIHILLGMIPAVVLGLLFHDTIKSLFNPINVMYALVVGGLLLIAAECLKPKEPRAPGLDDMTYRQAFMIGCFQCLALWPGFSRSGATISGGMLMGVSRYAASEFSFLLAVPMMMGATALDLYKSWGFLTTGDIPMFAVGFITAFVVALIAIKTFLQLIKRISFIPFAIYRFIVAAAVYVVFF.

7 helical membrane-spanning segments follow: residues 6-26, 45-65, 90-110, 116-136, 190-210, 222-242, and 252-272; these read SLLI…LPVS, AKTF…VMFW, LTLI…LLFH, LFNP…LIAA, YAAS…ATAL, GDIP…LIAI, and ISFI…YVVF.

The protein belongs to the UppP family.

Its subcellular location is the cell inner membrane. It carries out the reaction di-trans,octa-cis-undecaprenyl diphosphate + H2O = di-trans,octa-cis-undecaprenyl phosphate + phosphate + H(+). Its function is as follows. Catalyzes the dephosphorylation of undecaprenyl diphosphate (UPP). Confers resistance to bacitracin. The sequence is that of Undecaprenyl-diphosphatase from Escherichia coli O127:H6 (strain E2348/69 / EPEC).